A 131-amino-acid chain; its full sequence is Small ribosomal subunit protein bS6 (131 aa).

Residues 98 to 131 (EASPMVKAKDERRERRDDFANETADDADAGDSEE) are disordered. Positions 104–116 (KAKDERRERRDDF) are enriched in basic and acidic residues. The segment covering 120 to 131 (TADDADAGDSEE) has biased composition (acidic residues).

This sequence belongs to the bacterial ribosomal protein bS6 family.

Functionally, binds together with bS18 to 16S ribosomal RNA. This Citrobacter koseri (strain ATCC BAA-895 / CDC 4225-83 / SGSC4696) protein is Small ribosomal subunit protein bS6.